We begin with the raw amino-acid sequence, 188 residues long: GTP cyclohydrolase 1 (188 aa).

Residues C75, H78, and C146 each contribute to the Zn(2+) site.

Belongs to the GTP cyclohydrolase I family. Toroid-shaped homodecamer, composed of two pentamers of five dimers.

The catalysed reaction is GTP + H2O = 7,8-dihydroneopterin 3'-triphosphate + formate + H(+). It participates in cofactor biosynthesis; 7,8-dihydroneopterin triphosphate biosynthesis; 7,8-dihydroneopterin triphosphate from GTP: step 1/1. This Hahella chejuensis (strain KCTC 2396) protein is GTP cyclohydrolase 1.